A 528-amino-acid chain; its full sequence is GMP synthase [glutamine-hydrolyzing] (528 aa).

One can recognise a Glutamine amidotransferase type-1 domain in the interval 13–204 (SILILDFGSQ…VYSISKCKAD (192 aa)). Residue Cys90 is the Nucleophile of the active site. Active-site residues include His178 and Glu180. The region spanning 205–403 (WNTETFLEET…LGLPDEIIKR (199 aa)) is the GMPS ATP-PPase domain. 232 to 238 (SGGVDSS) is an ATP binding site.

Homodimer.

The enzyme catalyses XMP + L-glutamine + ATP + H2O = GMP + L-glutamate + AMP + diphosphate + 2 H(+). It functions in the pathway purine metabolism; GMP biosynthesis; GMP from XMP (L-Gln route): step 1/1. Its function is as follows. Catalyzes the synthesis of GMP from XMP. The chain is GMP synthase [glutamine-hydrolyzing] from Prochlorococcus marinus (strain MIT 9515).